The following is a 111-amino-acid chain: Glutaredoxin-C2 (111 aa).

Residues 3 to 103 enclose the Glutaredoxin domain; it reads MQKAKEIVNS…PLLTEAGAIA (101 aa). Cys-23 and Cys-26 are oxidised to a cystine.

This sequence belongs to the glutaredoxin family. CPYC subfamily.

Its subcellular location is the cytoplasm. Its function is as follows. Has a glutathione-disulfide oxidoreductase activity in the presence of NADPH and glutathione reductase. Reduces low molecular weight disulfides and proteins. The polypeptide is Glutaredoxin-C2 (GRXC2) (Arabidopsis thaliana (Mouse-ear cress)).